Consider the following 510-residue polypeptide: 2-isopropylmalate synthase (510 aa).

Residues 4–266 (IQVFDTTLRD…ETNLKLDETK (263 aa)) form the Pyruvate carboxyltransferase domain. Mn(2+)-binding residues include Asp-13, His-201, His-203, and Asn-237. The tract at residues 390–510 (QVETLQLQFV…DTARKDGVVS (121 aa)) is regulatory domain.

This sequence belongs to the alpha-IPM synthase/homocitrate synthase family. LeuA type 1 subfamily. In terms of assembly, homodimer. It depends on Mn(2+) as a cofactor.

The protein localises to the cytoplasm. The enzyme catalyses 3-methyl-2-oxobutanoate + acetyl-CoA + H2O = (2S)-2-isopropylmalate + CoA + H(+). It participates in amino-acid biosynthesis; L-leucine biosynthesis; L-leucine from 3-methyl-2-oxobutanoate: step 1/4. Functionally, catalyzes the condensation of the acetyl group of acetyl-CoA with 3-methyl-2-oxobutanoate (2-ketoisovalerate) to form 3-carboxy-3-hydroxy-4-methylpentanoate (2-isopropylmalate). In Staphylococcus carnosus (strain TM300), this protein is 2-isopropylmalate synthase.